A 98-amino-acid polypeptide reads, in one-letter code: Acylphosphatase (98 aa).

Positions Thr-12–Gln-98 constitute an Acylphosphatase-like domain. Residues Arg-27 and Asn-45 contribute to the active site.

Belongs to the acylphosphatase family.

The catalysed reaction is an acyl phosphate + H2O = a carboxylate + phosphate + H(+). The sequence is that of Acylphosphatase (acyP) from Burkholderia lata (strain ATCC 17760 / DSM 23089 / LMG 22485 / NCIMB 9086 / R18194 / 383).